A 291-amino-acid polypeptide reads, in one-letter code: Protease HtpX homolog (291 aa).

2 consecutive transmembrane segments (helical) span residues 4 to 24 (VVLF…SARV) and 38 to 58 (MGML…ISLL). A Zn(2+)-binding site is contributed by His-144. Residue Glu-145 is part of the active site. His-148 serves as a coordination point for Zn(2+). Transmembrane regions (helical) follow at residues 159 to 179 (LIQG…AYAI) and 199 to 219 (ISSI…VMYF). Glu-224 lines the Zn(2+) pocket.

It belongs to the peptidase M48B family. It depends on Zn(2+) as a cofactor.

It is found in the cell inner membrane. This chain is Protease HtpX homolog, found in Chlorobium phaeobacteroides (strain DSM 266 / SMG 266 / 2430).